The following is a 361-amino-acid chain: Protein RecA (361 aa).

77–84 (GPESSGKT) contributes to the ATP binding site.

The protein belongs to the RecA family.

It is found in the cytoplasm. In terms of biological role, can catalyze the hydrolysis of ATP in the presence of single-stranded DNA, the ATP-dependent uptake of single-stranded DNA by duplex DNA, and the ATP-dependent hybridization of homologous single-stranded DNAs. It interacts with LexA causing its activation and leading to its autocatalytic cleavage. The polypeptide is Protein RecA (Sinorhizobium fredii (strain NBRC 101917 / NGR234)).